We begin with the raw amino-acid sequence, 207 residues long: uncharacterized protein (207 aa).

Active-site charge relay system residues include S119 and H160.

It belongs to the peptidase S51 family.

This is an uncharacterized protein from Pasteurella multocida (strain Pm70).